We begin with the raw amino-acid sequence, 263 residues long: Endonuclease 8 (263 aa).

Pro2 functions as the Schiff-base intermediate with DNA in the catalytic mechanism. Residue Glu3 is the Proton donor of the active site. Lys53 acts as the Proton donor; for beta-elimination activity in catalysis. Positions 70, 125, and 169 each coordinate DNA. Residues 229 to 263 (KVFHRDGEACERCGGIIEKTTLSSRPFYWCPHCQK) form an FPG-type zinc finger. Residue Arg253 is the Proton donor; for delta-elimination activity of the active site.

Belongs to the FPG family. Zn(2+) serves as cofactor.

It carries out the reaction 2'-deoxyribonucleotide-(2'-deoxyribose 5'-phosphate)-2'-deoxyribonucleotide-DNA = a 3'-end 2'-deoxyribonucleotide-(2,3-dehydro-2,3-deoxyribose 5'-phosphate)-DNA + a 5'-end 5'-phospho-2'-deoxyribonucleoside-DNA + H(+). Its function is as follows. Involved in base excision repair of DNA damaged by oxidation or by mutagenic agents. Acts as a DNA glycosylase that recognizes and removes damaged bases. Has a preference for oxidized pyrimidines, such as thymine glycol, 5,6-dihydrouracil and 5,6-dihydrothymine. Has AP (apurinic/apyrimidinic) lyase activity and introduces nicks in the DNA strand. Cleaves the DNA backbone by beta-delta elimination to generate a single-strand break at the site of the removed base with both 3'- and 5'-phosphates. This Salmonella paratyphi A (strain AKU_12601) protein is Endonuclease 8.